The sequence spans 279 residues: Tryptophan prenyltransferase ComQ (279 aa).

The Mg(2+) site is built by Asp-67 and Asp-71.

Belongs to the FPP/GGPP synthase family. It depends on Mg(2+) as a cofactor.

The protein localises to the cell membrane. It catalyses the reaction L-tryptophyl-[protein] + (2E)-geranyl diphosphate = (2S,3R)-3-geranyl-2,3-dihydro-2,N(alpha)-cyclo-L-tryptophyl-[protein] + diphosphate. Its function is as follows. Part of a major quorum-sensing system that regulates the development of genetic competence. Involved in the maturation of the competence pheromone ComX. Acts by catalyzing the transfer of a geranyl group on the ComX pheromone. Cannot use farnesyl diphosphate (FPP). The protein is Tryptophan prenyltransferase ComQ of Bacillus spizizenii (Bacillus subtilis subsp. spizizenii).